A 283-amino-acid chain; its full sequence is Light-independent protochlorophyllide reductase iron-sulfur ATP-binding protein (283 aa).

Residues 15-20 and Lys-44 each bind ATP; that span reads GIGKST. Ser-19 serves as a coordination point for Mg(2+). 2 residues coordinate [4Fe-4S] cluster: Cys-100 and Cys-134. 185 to 186 serves as a coordination point for ATP; it reads NR.

It belongs to the NifH/BchL/ChlL family. In terms of assembly, homodimer. Protochlorophyllide reductase is composed of three subunits; ChlL, ChlN and ChlB. Requires [4Fe-4S] cluster as cofactor.

It catalyses the reaction chlorophyllide a + oxidized 2[4Fe-4S]-[ferredoxin] + 2 ADP + 2 phosphate = protochlorophyllide a + reduced 2[4Fe-4S]-[ferredoxin] + 2 ATP + 2 H2O. Its pathway is porphyrin-containing compound metabolism; chlorophyll biosynthesis (light-independent). Its function is as follows. Component of the dark-operative protochlorophyllide reductase (DPOR) that uses Mg-ATP and reduced ferredoxin to reduce ring D of protochlorophyllide (Pchlide) to form chlorophyllide a (Chlide). This reaction is light-independent. The L component serves as a unique electron donor to the NB-component of the complex, and binds Mg-ATP. In Synechococcus sp. (strain JA-2-3B'a(2-13)) (Cyanobacteria bacterium Yellowstone B-Prime), this protein is Light-independent protochlorophyllide reductase iron-sulfur ATP-binding protein.